A 554-amino-acid polypeptide reads, in one-letter code: Phenylalanine--tRNA ligase beta subunit (554 aa).

The B5 domain maps to 276–351; it reads LTPRYREISI…KNHGYEKFEG (76 aa). Mg(2+) contacts are provided by D329, D335, E338, and E339.

This sequence belongs to the phenylalanyl-tRNA synthetase beta subunit family. Type 2 subfamily. As to quaternary structure, tetramer of two alpha and two beta subunits. Requires Mg(2+) as cofactor.

The protein resides in the cytoplasm. The enzyme catalyses tRNA(Phe) + L-phenylalanine + ATP = L-phenylalanyl-tRNA(Phe) + AMP + diphosphate + H(+). In Methanococcus vannielii (strain ATCC 35089 / DSM 1224 / JCM 13029 / OCM 148 / SB), this protein is Phenylalanine--tRNA ligase beta subunit.